Reading from the N-terminus, the 299-residue chain is Epimerase family protein SERP0438 (299 aa).

This sequence belongs to the NAD(P)-dependent epimerase/dehydratase family. SDR39U1 subfamily.

The sequence is that of Epimerase family protein SERP0438 from Staphylococcus epidermidis (strain ATCC 35984 / DSM 28319 / BCRC 17069 / CCUG 31568 / BM 3577 / RP62A).